A 408-amino-acid polypeptide reads, in one-letter code: DNA primase DnaG (408 aa).

The Toprim domain occupies 166-241 (EEIIIVEGRA…KIDYIARAPP (76 aa)). Glu-172, Asp-215, and Asp-217 together coordinate Mg(2+).

This sequence belongs to the archaeal DnaG primase family. As to quaternary structure, forms a ternary complex with MCM helicase and DNA. Component of the archaeal exosome complex. The cofactor is Mg(2+).

It carries out the reaction ssDNA + n NTP = ssDNA/pppN(pN)n-1 hybrid + (n-1) diphosphate.. In terms of biological role, RNA polymerase that catalyzes the synthesis of short RNA molecules used as primers for DNA polymerase during DNA replication. Also part of the exosome, which is a complex involved in RNA degradation. Acts as a poly(A)-binding protein that enhances the interaction between heteromeric, adenine-rich transcripts and the exosome. The protein is DNA primase DnaG of Desulfurococcus amylolyticus (strain DSM 18924 / JCM 16383 / VKM B-2413 / 1221n) (Desulfurococcus kamchatkensis).